The sequence spans 220 residues: Uracil-DNA glycosylase 1 (220 aa).

The active-site Proton acceptor is the aspartate 65.

It belongs to the uracil-DNA glycosylase (UDG) superfamily. UNG family.

It localises to the cytoplasm. It carries out the reaction Hydrolyzes single-stranded DNA or mismatched double-stranded DNA and polynucleotides, releasing free uracil.. In terms of biological role, excises uracil residues from the DNA which can arise as a result of misincorporation of dUMP residues by DNA polymerase or due to deamination of cytosine. This chain is Uracil-DNA glycosylase 1, found in Bacteroides fragilis (strain ATCC 25285 / DSM 2151 / CCUG 4856 / JCM 11019 / LMG 10263 / NCTC 9343 / Onslow / VPI 2553 / EN-2).